Here is a 437-residue protein sequence, read N- to C-terminus: tRNA-2-methylthio-N(6)-dimethylallyladenosine synthase (437 aa).

The region spanning 1 to 115 (MKVYIETMGC…ISQVIHKEKA (115 aa)) is the MTTase N-terminal domain. Residues Cys10, Cys46, Cys78, Cys148, Cys152, and Cys155 each coordinate [4Fe-4S] cluster. In terms of domain architecture, Radical SAM core spans 134–367 (KKAQIRSLLN…QNRHKEILEE (234 aa)). One can recognise a TRAM domain in the interval 370 to 436 (KLEVGKTHVV…KGRLMAATKG (67 aa)).

The protein belongs to the methylthiotransferase family. MiaB subfamily. In terms of assembly, monomer. [4Fe-4S] cluster serves as cofactor.

Its subcellular location is the cytoplasm. It catalyses the reaction N(6)-dimethylallyladenosine(37) in tRNA + (sulfur carrier)-SH + AH2 + 2 S-adenosyl-L-methionine = 2-methylsulfanyl-N(6)-dimethylallyladenosine(37) in tRNA + (sulfur carrier)-H + 5'-deoxyadenosine + L-methionine + A + S-adenosyl-L-homocysteine + 2 H(+). Its function is as follows. Catalyzes the methylthiolation of N6-(dimethylallyl)adenosine (i(6)A), leading to the formation of 2-methylthio-N6-(dimethylallyl)adenosine (ms(2)i(6)A) at position 37 in tRNAs that read codons beginning with uridine. In Helicobacter pylori (strain ATCC 700392 / 26695) (Campylobacter pylori), this protein is tRNA-2-methylthio-N(6)-dimethylallyladenosine synthase.